We begin with the raw amino-acid sequence, 506 residues long: Lysine--tRNA ligase (506 aa).

Residues Glu411 and Glu418 each coordinate Mg(2+).

Belongs to the class-II aminoacyl-tRNA synthetase family. In terms of assembly, homodimer. Mg(2+) serves as cofactor.

It localises to the cytoplasm. The enzyme catalyses tRNA(Lys) + L-lysine + ATP = L-lysyl-tRNA(Lys) + AMP + diphosphate. This Thermosynechococcus vestitus (strain NIES-2133 / IAM M-273 / BP-1) protein is Lysine--tRNA ligase.